Here is a 234-residue protein sequence, read N- to C-terminus: MGQEHRRKAVVLFSGGIDSTTCLAVAKAEGFEAYALSFFYHQRHGVEVEAARRSAPALGAREHLVLELPLDRIGGSALTGHEEVPKDVPVEKMSDRIPATYVPARNTIFLSFALAWAEVLGAADIFIGVNALDYSGYPDCRPEYIAAFERMANLAIRETVEGRMRIKVHTPLIRLTKGEIIKRGLELGLDYSLTHSCYDPDARGLACGHCDSCILRKKGFMEAGIPDPTRYVRD.

An ATP-binding site is contributed by 13–23 (FSGGIDSTTCL). Zn(2+)-binding residues include Cys197, Cys207, Cys210, and Cys213.

This sequence belongs to the QueC family. Zn(2+) serves as cofactor.

The enzyme catalyses 7-carboxy-7-deazaguanine + NH4(+) + ATP = 7-cyano-7-deazaguanine + ADP + phosphate + H2O + H(+). It functions in the pathway purine metabolism; 7-cyano-7-deazaguanine biosynthesis. In terms of biological role, catalyzes the ATP-dependent conversion of 7-carboxy-7-deazaguanine (CDG) to 7-cyano-7-deazaguanine (preQ(0)). In Syntrophobacter fumaroxidans (strain DSM 10017 / MPOB), this protein is 7-cyano-7-deazaguanine synthase.